Consider the following 120-residue polypeptide: Ragulator complex protein LAMTOR4 homolog (120 aa).

Positions 93–120 are disordered; it reads QNGVTTTTSSSSSNSVYNDASDSGAVLA. Low complexity predominate over residues 97-107; it reads TTTTSSSSSNS.

The protein belongs to the LAMTOR4 family. In terms of assembly, part of the Ragulator complex composed of Lamtor3, Lamtor2, CG14184, CG14812, and Lamtor4.

The protein localises to the lysosome. Its function is as follows. Regulator of the TOR pathway, a signaling cascade that promotes cell growth in response to growth factors, energy levels, and amino acids. As part of the Ragulator complex, may activate the TOR signaling cascade in response to amino acids. The polypeptide is Ragulator complex protein LAMTOR4 homolog (Drosophila melanogaster (Fruit fly)).